We begin with the raw amino-acid sequence, 310 residues long: Protoheme IX farnesyltransferase 2 (310 aa).

The next 9 membrane-spanning stretches (helical) occupy residues 25–45 (PGII…AAKG), 49–69 (LVLM…GCAI), 98–118 (HVLL…ALFT), 121–141 (LALL…SLYM), 145–165 (SVYG…VGYC), 176–196 (VILL…IAIF), 222–242 (IVLY…AGYT), 245–265 (AFMA…LKGY), and 277–297 (QVFG…ALDF).

It belongs to the UbiA prenyltransferase family. Protoheme IX farnesyltransferase subfamily.

It is found in the cell inner membrane. The enzyme catalyses heme b + (2E,6E)-farnesyl diphosphate + H2O = Fe(II)-heme o + diphosphate. Its pathway is porphyrin-containing compound metabolism; heme O biosynthesis; heme O from protoheme: step 1/1. Converts heme B (protoheme IX) to heme O by substitution of the vinyl group on carbon 2 of heme B porphyrin ring with a hydroxyethyl farnesyl side group. The protein is Protoheme IX farnesyltransferase 2 of Shewanella sp. (strain MR-4).